The sequence spans 169 residues: Mu-like prophage FluMu host-nuclease inhibitor protein gam (169 aa).

To phage Mu protein gam.

Protects linear double-stranded DNA of Mu genome from exonuclease degradation. The polypeptide is Mu-like prophage FluMu host-nuclease inhibitor protein gam (Haemophilus influenzae (strain ATCC 51907 / DSM 11121 / KW20 / Rd)).